Consider the following 113-residue polypeptide: uncharacterized protein (113 aa).

2 disordered regions span residues 1-22 and 90-113; these read MGEH…PLAQ and DGRH…SDDL. Over residues 90 to 99 the composition is skewed to basic and acidic residues; it reads DGRHTTESSF. The span at 100–113 shows a compositional bias: low complexity; sequence EHSSPSRSPQSDDL.

This is an uncharacterized protein from Mycobacterium tuberculosis (strain ATCC 25618 / H37Rv).